Reading from the N-terminus, the 343-residue chain is Dihydroorotate dehydrogenase (quinone) (343 aa).

FMN is bound by residues 58–62 (AGYDK) and S82. Residue K62 participates in substrate binding. 107–111 (NRMGF) is a substrate binding site. N136 and N167 together coordinate FMN. N167 is a substrate binding site. The active-site Nucleophile is S170. N172 contacts substrate. Positions 206 and 234 each coordinate FMN. 235–236 (NT) is a substrate binding site. FMN-binding positions include G256, G285, and 306 to 307 (YS).

It belongs to the dihydroorotate dehydrogenase family. Type 2 subfamily. As to quaternary structure, monomer. FMN serves as cofactor.

The protein localises to the cell membrane. The catalysed reaction is (S)-dihydroorotate + a quinone = orotate + a quinol. It functions in the pathway pyrimidine metabolism; UMP biosynthesis via de novo pathway; orotate from (S)-dihydroorotate (quinone route): step 1/1. Catalyzes the conversion of dihydroorotate to orotate with quinone as electron acceptor. In Erythrobacter litoralis (strain HTCC2594), this protein is Dihydroorotate dehydrogenase (quinone).